Reading from the N-terminus, the 174-residue chain is MVMTNILCQILSDDLPELPPCREPSKGMIVGNLGMTSNTMTTEGPFAKLDVESVLSFMSPSCTLRSFPSSLGKPALQTKEESKADFQGLKDFFYNFQLRVKDGAEPVIDEPARKVVLHIEGKGDSLVGRFETEYVYILQINEEGTMVEDFFQFADSATRDAWGKKIEAHFSARN.

This sequence belongs to the trt14 isomerase family. In terms of assembly, homodimer.

Its pathway is secondary metabolite biosynthesis; terpenoid biosynthesis. Part of the gene cluster B that mediates the biosynthesis of austinol and dehydroaustinol, two fungal meroterpenoids. The first step of the pathway is the synthesis of 3,5-dimethylorsellinic acid by the polyketide synthase ausA. 3,5-dimethylorsellinic acid is then prenylated by the polyprenyl transferase ausN. Further epoxidation by the FAD-dependent monooxygenase ausM and cyclization by the probable terpene cyclase ausL lead to the formation of protoaustinoid A. Protoaustinoid A is then oxidized to spiro-lactone preaustinoid A3 by the combined action of the FAD-binding monooxygenases ausB and ausC, and the dioxygenase ausE. Acid-catalyzed keto-rearrangement and ring contraction of the tetraketide portion of preaustinoid A3 by ausJ lead to the formation of preaustinoid A4. The aldo-keto reductase ausK, with the help of ausH, is involved in the next step by transforming preaustinoid A4 into isoaustinone which is in turn hydroxylated by the P450 monooxygenase ausI to form austinolide. Finally, the cytochrome P450 monooxygenase ausG modifies austinolide to austinol. Austinol can be further modified to dehydroaustinol which forms a diffusible complex with diorcinol that initiates conidiation. Due to genetic rearrangements of the clusters and the subsequent loss of some enzymes, the end products of the Emericella nidulans austinoid biosynthesis clusters are austinol and dehydroaustinol, even if additional enzymes, such as the O-acetyltransferase ausQ and the cytochrome P450 monooxygenase ausR are still functional. The polypeptide is Austinoid biosynthesis clusters protein H (Emericella nidulans (strain FGSC A4 / ATCC 38163 / CBS 112.46 / NRRL 194 / M139) (Aspergillus nidulans)).